The primary structure comprises 415 residues: Tyrosine--tRNA ligase (415 aa).

The 'HIGH' region signature appears at 54 to 63 (PTGTDIHIGH). Residues 248–252 (KMSKS) carry the 'KMSKS' region motif. ATP is bound at residue lysine 251. The region spanning 351 to 415 (AKAFYLFSKM…GKKKFLRVST (65 aa)) is the S4 RNA-binding domain.

The protein belongs to the class-I aminoacyl-tRNA synthetase family. TyrS type 2 subfamily. In terms of assembly, homodimer.

The protein localises to the cytoplasm. It carries out the reaction tRNA(Tyr) + L-tyrosine + ATP = L-tyrosyl-tRNA(Tyr) + AMP + diphosphate + H(+). Catalyzes the attachment of tyrosine to tRNA(Tyr) in a two-step reaction: tyrosine is first activated by ATP to form Tyr-AMP and then transferred to the acceptor end of tRNA(Tyr). This Prochlorococcus marinus (strain NATL2A) protein is Tyrosine--tRNA ligase.